A 165-amino-acid chain; its full sequence is Small ribosomal subunit protein uS5 (165 aa).

Positions 10 to 73 (LNEKLIAVNR…EKARRNMVTV (64 aa)) constitute an S5 DRBM domain.

Belongs to the universal ribosomal protein uS5 family. In terms of assembly, part of the 30S ribosomal subunit. Contacts proteins S4 and S8.

In terms of biological role, with S4 and S12 plays an important role in translational accuracy. Located at the back of the 30S subunit body where it stabilizes the conformation of the head with respect to the body. This is Small ribosomal subunit protein uS5 from Photobacterium profundum (strain SS9).